The sequence spans 1854 residues: Immunoglobulin A1 protease (1854 aa).

The signal sequence occupies residues 1-37; it reads MKKFLGEKQTRFAFRKLAVGLVSAAISSLFFVSIVGV. Residues 38-99 constitute a propeptide that is removed on maturation; sequence DSVQAQEKLN…NAGAKTLPNT (62 aa). The LPXTG sorting signal signature appears at 96–100; it reads LPNTG. T99 carries the post-translational modification Pentaglycyl murein peptidoglycan amidated threonine. 2 consecutive transmembrane segments (helical) span residues 106–125 and 132–154; these read TMMAAGLLLTTIGLVVFAVS and KFLLTVLVGASVGGGLILSVDAL. Residues 155–1854 are Extracellular-facing; that stretch reads ENGSLLQYNA…FRKSIFENQK (1700 aa). The G5 domain occupies 256–335; sequence KPELLYKETS…PKIVEKGTKK (80 aa). 10 consecutive repeat copies span residues 349 to 368, 369 to 388, 389 to 406, 407 to 426, 427 to 446, 447 to 466, 467 to 486, 487 to 506, 507 to 526, and 527 to 546. The 10 X 20 AA approximate tandem repeats stretch occupies residues 349 to 546; the sequence is VQPEQVAPLP…EYTGNIEPAA (198 aa). Positions 533-550 are enriched in low complexity; that stretch reads EPPQEYTGNIEPAAPEAE. Residues 533-570 form a disordered region; it reads EPPQEYTGNIEPAAPEAENPTEKAQEPKEQKQEPEKNI. The segment covering 552–570 has biased composition (basic and acidic residues); sequence PTEKAQEPKEQKQEPEKNI. H1494 serves as a coordination point for Zn(2+). Residue E1495 is part of the active site. Zn(2+)-binding residues include H1498 and E1518.

This sequence belongs to the peptidase M26 family. Requires Zn(2+) as cofactor. Post-translationally, the Gram-positive cell-wall anchor motif LPXTG is located in the N-terminal part, in contrast to such motifs in other known streptococcal and staphylococcal proteins. The protease could be cleaved by the sortase and anchored in the membrane via the two potential N-terminal transmembrane domains, whereas the propeptide located prior to the LPXTG motif would remain attached to the cell wall peptidoglycan by an amide bond.

The protein resides in the secreted. It is found in the cell wall. It localises to the membrane. It carries out the reaction Cleavage of Pro-|-Thr bond in the hinge region of the heavy chain of human IgA.. With respect to regulation, inhibited by EDTA. Its function is as follows. Zinc metalloproteinase which cleaves human immunoglobulin A1 (IgA1) in the hinge region. The protein is Immunoglobulin A1 protease (iga) of Streptococcus sanguinis.